Reading from the N-terminus, the 213-residue chain is Imidazole glycerol phosphate synthase subunit HisH (213 aa).

The 208-residue stretch at 4–211 folds into the Glutamine amidotransferase type-1 domain; it reads NLGLIDYGMG…LTWLRNGAEP (208 aa). Cysteine 82 functions as the Nucleophile in the catalytic mechanism. Catalysis depends on residues histidine 186 and glutamate 188.

In terms of assembly, heterodimer of HisH and HisF.

It is found in the cytoplasm. It carries out the reaction 5-[(5-phospho-1-deoxy-D-ribulos-1-ylimino)methylamino]-1-(5-phospho-beta-D-ribosyl)imidazole-4-carboxamide + L-glutamine = D-erythro-1-(imidazol-4-yl)glycerol 3-phosphate + 5-amino-1-(5-phospho-beta-D-ribosyl)imidazole-4-carboxamide + L-glutamate + H(+). The catalysed reaction is L-glutamine + H2O = L-glutamate + NH4(+). Its pathway is amino-acid biosynthesis; L-histidine biosynthesis; L-histidine from 5-phospho-alpha-D-ribose 1-diphosphate: step 5/9. In terms of biological role, IGPS catalyzes the conversion of PRFAR and glutamine to IGP, AICAR and glutamate. The HisH subunit catalyzes the hydrolysis of glutamine to glutamate and ammonia as part of the synthesis of IGP and AICAR. The resulting ammonia molecule is channeled to the active site of HisF. The chain is Imidazole glycerol phosphate synthase subunit HisH from Synechococcus sp. (strain CC9605).